A 409-amino-acid polypeptide reads, in one-letter code: Argininosuccinate synthase (409 aa).

ATP is bound by residues 10–18 (AYSGGLDTS) and alanine 37. L-citrulline contacts are provided by tyrosine 90 and serine 95. Glycine 120 is an ATP binding site. 3 residues coordinate L-aspartate: threonine 122, asparagine 126, and aspartate 127. Asparagine 126 provides a ligand contact to L-citrulline. The L-citrulline site is built by arginine 130, serine 182, serine 191, glutamate 267, and tyrosine 279.

It belongs to the argininosuccinate synthase family. Type 1 subfamily. In terms of assembly, homotetramer.

The protein localises to the cytoplasm. It catalyses the reaction L-citrulline + L-aspartate + ATP = 2-(N(omega)-L-arginino)succinate + AMP + diphosphate + H(+). The protein operates within amino-acid biosynthesis; L-arginine biosynthesis; L-arginine from L-ornithine and carbamoyl phosphate: step 2/3. The polypeptide is Argininosuccinate synthase (Azoarcus sp. (strain BH72)).